Reading from the N-terminus, the 1011-residue chain is Translation initiation factor IF-2 (1011 aa).

A compositionally biased stretch (basic and acidic residues) spans 49 to 77 (YIHEHGTEESPRRRSAGEDEFKPKIDLSK). Disordered stretches follow at residues 49-152 (YIHE…RFIT) and 187-407 (AAPA…LSLS). Residues 93 to 104 (APPPPPPPPPRP) are compositionally biased toward pro residues. The span at 105–115 (AVKAPSPVSQE) shows a compositional bias: low complexity. The segment covering 116-126 (PRPPAVPPAPQ) has biased composition (pro residues). Low complexity-rich tracts occupy residues 187-212 (AAPA…KAPV) and 228-242 (TAKP…AATP). Composition is skewed to pro residues over residues 243–252 (APTPGRPLPG) and 276–290 (SAPP…PPPQ). The span at 316–329 (GPGGGSGGPGGFQR) shows a compositional bias: gly residues. Positions 361–380 (LAPPGAPANKPAGRPAPARR) are enriched in low complexity. Positions 502–678 (VRPPVVTIMG…CLVADLGDLK (177 aa)) constitute a tr-type G domain. The segment at 511–518 (GHVDHGKT) is G1. Residue 511-518 (GHVDHGKT) coordinates GTP. Residues 536–540 (GITQH) form a G2 region. Residues 564 to 567 (DTPG) are G3. GTP contacts are provided by residues 564–568 (DTPGH) and 618–621 (NKID). The interval 618–621 (NKID) is G4. The segment at 654–656 (SAK) is G5.

Belongs to the TRAFAC class translation factor GTPase superfamily. Classic translation factor GTPase family. IF-2 subfamily.

The protein resides in the cytoplasm. Functionally, one of the essential components for the initiation of protein synthesis. Protects formylmethionyl-tRNA from spontaneous hydrolysis and promotes its binding to the 30S ribosomal subunits. Also involved in the hydrolysis of GTP during the formation of the 70S ribosomal complex. The sequence is that of Translation initiation factor IF-2 from Koribacter versatilis (strain Ellin345).